Consider the following 186-residue polypeptide: Protein TRL14 (186 aa).

3 N-linked (GlcNAc...) asparagine; by host glycosylation sites follow: asparagine 24, asparagine 64, and asparagine 72. Residues 143–163 (HAVWAGVVVSVALIALYMGSH) form a helical membrane-spanning segment.

It belongs to the RL11 family.

It localises to the virion membrane. The chain is Protein TRL14 from Human cytomegalovirus (strain AD169) (HHV-5).